Reading from the N-terminus, the 320-residue chain is Replication factor C small subunit 2 (320 aa).

44-51 (GPPGTGKT) is a binding site for ATP.

This sequence belongs to the activator 1 small subunits family. RfcS subfamily. Heteromultimer composed of small subunits (RfcS) and large subunits (RfcL).

In terms of biological role, part of the RFC clamp loader complex which loads the PCNA sliding clamp onto DNA. The chain is Replication factor C small subunit 2 from Pyrobaculum islandicum (strain DSM 4184 / JCM 9189 / GEO3).